A 334-amino-acid polypeptide reads, in one-letter code: MASVLQKLITPLFSGPLEPPRNKVTVVGVGQVGMACAVSVLLRELADELALVDVVEDKLKGEMMDLQHGSLFLKTPKIVSGKDYSVTANSRIVVVTAGVRQQEGESRLNLVQRNVNIFKHIIPQIVKYSPNCILIVVSNPVDVLTYVTWKLSGLPKHRVIGSGTNLDSARFRYLMAERLGIHPSSFNGWILGEHGDSSVPVWSGANVAGVSLQKLNPDIGKDTDRENWKETHKKVVDSAYEVIRLKGYTNWAIGLSVADLTESIMKNLNRVHPVSTMVKGMYGISDEVYLSLPCVLNSAGVGSVVNMTLTVDEVSQLKKSADMLWHIQRDLRDL.

NAD(+)-binding positions include 30–58 (GQVG…VEDK) and Arg-100. Residues Arg-107, Asn-139, and Arg-170 each coordinate substrate. NAD(+) is bound at residue Asn-139. His-194 (proton acceptor) is an active-site residue. Residue Thr-249 coordinates substrate.

It belongs to the LDH/MDH superfamily. LDH family. As to quaternary structure, homotetramer.

The protein resides in the cytoplasm. The catalysed reaction is (S)-lactate + NAD(+) = pyruvate + NADH + H(+). The protein operates within fermentation; pyruvate fermentation to lactate; (S)-lactate from pyruvate: step 1/1. The polypeptide is L-lactate dehydrogenase B-B chain (Danio rerio (Zebrafish)).